A 258-amino-acid polypeptide reads, in one-letter code: Acetylglutamate kinase (258 aa).

Substrate is bound by residues 44–45 (GG), Arg66, and Asn158. ATP-binding positions include 181-186 (DVSGIL) and 209-211 (IIT).

It belongs to the acetylglutamate kinase family. ArgB subfamily. In terms of assembly, homodimer.

The protein resides in the cytoplasm. It carries out the reaction N-acetyl-L-glutamate + ATP = N-acetyl-L-glutamyl 5-phosphate + ADP. It participates in amino-acid biosynthesis; L-arginine biosynthesis; N(2)-acetyl-L-ornithine from L-glutamate: step 2/4. Catalyzes the ATP-dependent phosphorylation of N-acetyl-L-glutamate. In Citrobacter koseri (strain ATCC BAA-895 / CDC 4225-83 / SGSC4696), this protein is Acetylglutamate kinase.